A 48-amino-acid polypeptide reads, in one-letter code: Protein TUNAR (48 aa).

The interval 1–20 (MVITSGNDEDRGGQEKESKE) is disordered. The span at 8 to 20 (DEDRGGQEKESKE) shows a compositional bias: basic and acidic residues. A helical membrane pass occupies residues 24–44 (LAMLGIIGTILNLIVIIFVYI).

As to quaternary structure, interacts with ATPase ATP2A2/SERCA2. Interacts with ATPase ATP2A3/SERCA3; the interaction occurs at low levels in low glucose conditions and is increased by high glucose levels. In terms of tissue distribution, in the adult, expressed in Purkinje cells in the cerebellum, in motor neurons and interneurons in the spinal cord and in neurons of the cortex, hippocampus and thalamus (at protein level). Also detected in the developing cortex, hippocampus and thalamus at embryonic day E15.5 (at protein level).

The protein resides in the endoplasmic reticulum membrane. It is found in the extracellular vesicle membrane. Its function is as follows. In neurons, plays a role in the regulation of intracellular Ca(2+), possibly by acting as an activator of ATP2A2/SERCA2, thus increasing the efficiency with which Ca(2+) is removed from the cytoplasm. Inhibits differentiation of embryonic stem cells into neurons and inhibits neurite outgrowth, likely as a result of its role in intracellular Ca(2+) regulation. In pancreatic beta cells, lowers Ca(2+) levels in the endoplasmic reticulum and enhances glucose-stimulated insulin secretion. The chain is Protein TUNAR from Mus musculus (Mouse).